A 303-amino-acid polypeptide reads, in one-letter code: N-acetyl-D-glucosamine kinase (303 aa).

Residues 4–11 (GFDIGGTK) and 133–140 (GVGGGLVL) each bind ATP. The Zn(2+) site is built by His-157, Cys-177, Cys-179, and Cys-184.

This sequence belongs to the ROK (NagC/XylR) family. NagK subfamily.

It carries out the reaction N-acetyl-D-glucosamine + ATP = N-acetyl-D-glucosamine 6-phosphate + ADP + H(+). It functions in the pathway cell wall biogenesis; peptidoglycan recycling. Catalyzes the phosphorylation of N-acetyl-D-glucosamine (GlcNAc) derived from cell-wall degradation, yielding GlcNAc-6-P. In Salmonella dublin (strain CT_02021853), this protein is N-acetyl-D-glucosamine kinase.